Consider the following 101-residue polypeptide: Small ribosomal subunit protein uS10 (101 aa).

The protein belongs to the universal ribosomal protein uS10 family. As to quaternary structure, part of the 30S ribosomal subunit.

Its function is as follows. Involved in the binding of tRNA to the ribosomes. This is Small ribosomal subunit protein uS10 from Brachyspira pilosicoli (Serpulina pilosicoli).